We begin with the raw amino-acid sequence, 54 residues long: Large ribosomal subunit protein bL33 (54 aa).

It belongs to the bacterial ribosomal protein bL33 family.

The chain is Large ribosomal subunit protein bL33 from Corynebacterium efficiens (strain DSM 44549 / YS-314 / AJ 12310 / JCM 11189 / NBRC 100395).